The following is a 285-amino-acid chain: Avenin-like b2 (285 aa).

Positions 1–18 (MKVFILALLALTATTAIA) are cleaved as a signal peptide.

The protein belongs to the prolamin family. Contains disulfide bonds.

In terms of biological role, seed storage protein. Might be integrated via inter-chain disulfide bonds within the glutenin polymer. The protein is Avenin-like b2 of Triticum aestivum (Wheat).